A 163-amino-acid polypeptide reads, in one-letter code: 6,7-dimethyl-8-ribityllumazine synthase (163 aa).

5-amino-6-(D-ribitylamino)uracil-binding positions include Phe22, 56–58 (TFE), and 80–82 (AVI). 85-86 (GT) is a binding site for (2S)-2-hydroxy-3-oxobutyl phosphate. His88 acts as the Proton donor in catalysis. Met113 serves as a coordination point for 5-amino-6-(D-ribitylamino)uracil. Arg127 is a binding site for (2S)-2-hydroxy-3-oxobutyl phosphate.

The protein belongs to the DMRL synthase family.

It catalyses the reaction (2S)-2-hydroxy-3-oxobutyl phosphate + 5-amino-6-(D-ribitylamino)uracil = 6,7-dimethyl-8-(1-D-ribityl)lumazine + phosphate + 2 H2O + H(+). It functions in the pathway cofactor biosynthesis; riboflavin biosynthesis; riboflavin from 2-hydroxy-3-oxobutyl phosphate and 5-amino-6-(D-ribitylamino)uracil: step 1/2. Catalyzes the formation of 6,7-dimethyl-8-ribityllumazine by condensation of 5-amino-6-(D-ribitylamino)uracil with 3,4-dihydroxy-2-butanone 4-phosphate. This is the penultimate step in the biosynthesis of riboflavin. The chain is 6,7-dimethyl-8-ribityllumazine synthase from Anaeromyxobacter sp. (strain Fw109-5).